A 1007-amino-acid chain; its full sequence is MSNKLVKEKRVDQADLAWLTDPEVYEVNTIPPHSDHESFQSQEELEEGKSSLVQSLDGDWLIDYAENGQGPVNFYAEDFDDSNFKSVKVPGNLELQGFGQPQYVNVQYPWDGSEEIFPPQIPSKNPLASYVRYFDLDEAFWDKEVSLKFDGAATAIYVWLNGHFVGYGEDSFTPSEFMVTKFLKKENNRLAVALYKYSSASWLEDQDFWRMSGLFRSVTLQAKPRLHLEDLKLTASLTDNYQKGKLEVEANIAYRLPNASFKLEVRDSEGDLVAEKLGPIRSEQLEFTLADLPVAAWSAEKPNLYQVRLYLYQAGSLLEVSRQEVGFRNFELKDGIMYLNGQRIVFKGANRHEFDSKLGRAITEEDMIWDIKTMKRSNINAVRCSHYPNQSLFYRLCDKYGLYVIDEANLESHGTWEKVGGHEDPSFNVPGDDQHWLGASLSRVKNMMARDKNHASILIWSLGNESYAGTVFAQMADYVRKADPTRVQHYEGVTHNRKFDDATQIESRMYAPAKVIEEYLTNKPAKPFISVEYAHAMGNSVGDLAAYTALEKYPHYQGGFIWDWIDQGLEKDGHLLYGGDFDDRPTDYEFCGNGLVFADRTESPKLANVKALYANLKLEVKDGQLFLKNDNLFTNSSSYYFLTSLLVDGKLTYQSRPLTFGLEPGESGTFALPWPEVADEKGEVVYRVTAHLKEDLPWADEGFTVAEAEEVAQKLPEFKPEGRPDLVDSDYNLGLKGNNFQILFSKVKGWPVSLKYAGREYLKRLPEFTFWRALTDNDRGAGYGYDLARWENAGKYARLKDISCEVKEDSVLVKTAFTLPVALKGDLTVTYEVDGRGKIAVTADFPGAEEAGLLPAFGLNLALPKELTDYRYYGLGPNESYPDRLEGNYLGIYQGAVKKNFSPYRPQETGNRSKVRWYQLFDEKGGLEFTANGADLNLSALPYSAAQIEAADHAFELTNNYTWVRALSAQMGVGGDDSWGQKVHPEFCLDAQKARQLRLVIQPLLLK.

The tract at residues 29-48 is disordered; that stretch reads TIPPHSDHESFQSQEELEEG. Glutamate 465 (proton donor) is an active-site residue. The active-site Nucleophile is glutamate 532.

The protein belongs to the glycosyl hydrolase 2 family. In terms of assembly, monomer.

The catalysed reaction is Hydrolysis of terminal non-reducing beta-D-galactose residues in beta-D-galactosides.. This chain is Beta-galactosidase (lacZ), found in Lactobacillus delbrueckii subsp. bulgaricus.